Here is a 182-residue protein sequence, read N- to C-terminus: NADH-quinone oxidoreductase subunit I (182 aa).

4Fe-4S ferredoxin-type domains are found at residues 52–82 and 92–121; these read LTRDPDGEERCVACNLCAVACPVGCISLQKA and DFFRINFSRCIFCGLCEEACPTTAIQLTPD. 8 residues coordinate [4Fe-4S] cluster: cysteine 62, cysteine 65, cysteine 68, cysteine 72, cysteine 101, cysteine 104, cysteine 107, and cysteine 111.

It belongs to the complex I 23 kDa subunit family. As to quaternary structure, NDH-1 is composed of 13 different subunits. Subunits NuoA, H, J, K, L, M, N constitute the membrane sector of the complex. [4Fe-4S] cluster serves as cofactor.

It localises to the cell inner membrane. The catalysed reaction is a quinone + NADH + 5 H(+)(in) = a quinol + NAD(+) + 4 H(+)(out). Its function is as follows. NDH-1 shuttles electrons from NADH, via FMN and iron-sulfur (Fe-S) centers, to quinones in the respiratory chain. The immediate electron acceptor for the enzyme in this species is believed to be ubiquinone. Couples the redox reaction to proton translocation (for every two electrons transferred, four hydrogen ions are translocated across the cytoplasmic membrane), and thus conserves the redox energy in a proton gradient. Required for plants roots colonization. This chain is NADH-quinone oxidoreductase subunit I (nuoI), found in Pseudomonas fluorescens.